We begin with the raw amino-acid sequence, 654 residues long: Endoplasmic reticulum chaperone BiP (654 aa).

The signal sequence occupies residues 1-18; that stretch reads MKLSLVAAMLLLLSAARA. A required for interaction with ELAPOR1 region spans residues 1–80; sequence MKLSLVAAML…EGERLIGDAA (80 aa). 36–39 contacts ATP; that stretch reads GTTY. S86 carries the phosphoserine modification. Residue K96 coordinates ATP. N6-acetyllysine is present on K125. Positions 125-280 are nucleotide-binding (NBD); sequence KPYIQVDIGG…KKKTGKDVRK (156 aa). Y160 carries the post-translational modification 3'-nitrotyrosine. Position 213 is an N6-acetyllysine (K213). 227-229 is a binding site for ATP; it reads GGT. Residue K271 is modified to N6-acetyllysine. 293–300 lines the ATP pocket; sequence EKAKRALS. Position 326 is an N6-acetyllysine (K326). A Glycyl lysine isopeptide (Lys-Gly) (interchain with G-Cter in SUMO2) cross-link involves residue K352. K353 carries the N6-acetyllysine; alternate modification. K353 participates in a covalent cross-link: Glycyl lysine isopeptide (Lys-Gly) (interchain with G-Cter in SUMO1); alternate. 364-367 provides a ligand contact to ATP; it reads GSTR. Positions 409-419 are interdomain linker; it reads QDTGDLALLDV. Residues 420 to 500 form a substrate-binding (SBD) region; the sequence is CPLTLGIETV…PRGVPQIEVT (81 aa). K447 carries the N6-succinyllysine modification. Omega-N-methylarginine is present on R492. At T518 the chain carries O-AMP-threonine; alternate. T518 bears the Phosphothreonine; alternate mark. K585 carries the N6,N6,N6-trimethyllysine; by METTL21A; in vitro modification. An N6,N6-dimethyllysine; alternate modification is found at K585. N6-methyllysine; alternate is present on K585. An N6-methyllysine modification is found at K591. Positions 633 to 654 are disordered; that stretch reads KLYGSAGPPPTGEEDTAEKDEL. Phosphothreonine is present on residues T643 and T648. The segment covering 644–654 has biased composition (acidic residues); the sequence is GEEDTAEKDEL. Residues 651–654 carry the Prevents secretion from ER motif; the sequence is KDEL.

This sequence belongs to the heat shock protein 70 family. Monomer and homooligomer; homooligomerization via the interdomain linker inactivates the chaperone activity and acts as a storage of HSPA5/BiP molecules. Interacts with DNAJC1 (via J domain). Component of an EIF2 complex at least composed of CELF1/CUGBP1, CALR, CALR3, EIF2S1, EIF2S2, HSP90B1 and HSPA5. Part of a large chaperone multiprotein complex comprising DNAJB11, HSP90B1, HSPA5, HYOU, PDIA2, PDIA4, PDIA6, PPIB, SDF2L1, UGGT1 and very small amounts of ERP29, but not, or at very low levels, CALR nor CANX. Interacts with TMEM132A and TRIM21. May form a complex with ERLEC1, OS9, SEL1L and SYVN1. Interacts with DNAJC10. Interacts with DNAJB9/ERdj4; leading to recruit HSPA5/BiP to ERN1/IRE1. Interacts with ERN1/IRE1 (via luminal domain); the interaction takes place following interaction with DNAJB9/ERdj4 and leads to inactivate ERN1/IRE1, the interaction also competitively inhibits ERN1 interaction with MANF. Interacts directly with MANF (via SAP domain); the interaction inhibits ATP binding to HSPA5/BiP and subsequent nucleotide exchange. Interacts with EIF2AK3/PERK (via luminal domain); interaction leads to inactivate EIF2AK3/PERK. Interacts with MX1. Interacts with METTL23. Interacts with CEMIP; the interaction induces calcium leakage from the endoplasmic reticulum and cell migration. Interacts with PCSK4 form; the interaction takes place in the endoplasmic reticulum. Interacts with CIPC. Interacts with CCDC88B (via C-terminus); the interaction opposes ERN1-mediated JNK activation, protecting against apoptosis. Interacts with INPP5K; necessary for INPP5K localization at the endoplasmic reticulum. Interacts with MANF; the interaction is direct. Interacts with LOXL2; leading to activate the ERN1/IRE1-XBP1 pathway of the unfolded protein response. Interacts with CLU under stressed condition; interaction increases CLU protein stability; facilitates its retrotranslocation and redistribution to the mitochondria; cooperatively suppress stress-induced apoptosis by stabilizing mitochondrial membrane integrity. Interacts with CCDC47. Interacts with CLN3. Interacts with ELAPOR1; may regulate the function of HSPA5 in apoptosis and cell proliferation. Interacts with CASP7. Interacts with ILDR2; the interaction stabilizes ILDR2 expression. Interacts with ADAM7. In terms of processing, in unstressed cells, AMPylation at Thr-518 by FICD inactivates the chaperome activity: AMPylated form is locked in a relatively inert state and only weakly stimulated by J domain-containing proteins. In response to endoplasmic reticulum stress, de-AMPylation by the same protein, FICD, restores the chaperone activity.

Its subcellular location is the endoplasmic reticulum lumen. The protein resides in the melanosome. It is found in the cytoplasm. It localises to the cell surface. The catalysed reaction is ATP + H2O = ADP + phosphate + H(+). With respect to regulation, the chaperone activity is regulated by ATP-induced allosteric coupling of the nucleotide-binding (NBD) and substrate-binding (SBD) domains. In the ADP-bound and nucleotide-free (apo) states, the two domains have little interaction. In contrast, in the ATP-bound state the two domains are tightly coupled, which results in drastically accelerated kinetics in both binding and release of polypeptide substrates. J domain-containing co-chaperones (DNAJB9/ERdj4 or DNAJC10/ERdj5) stimulate the ATPase activity and are required for efficient substrate recognition by HSPA5/BiP. Homooligomerization inactivates participating HSPA5/BiP protomers and probably act as reservoirs to store HSPA5/BiP molecules when they are not needed by the cell. In terms of biological role, endoplasmic reticulum chaperone that plays a key role in protein folding and quality control in the endoplasmic reticulum lumen. Involved in the correct folding of proteins and degradation of misfolded proteins via its interaction with DNAJC10/ERdj5, probably to facilitate the release of DNAJC10/ERdj5 from its substrate. Acts as a key repressor of the EIF2AK3/PERK and ERN1/IRE1-mediated unfolded protein response (UPR). In the unstressed endoplasmic reticulum, recruited by DNAJB9/ERdj4 to the luminal region of ERN1/IRE1, leading to disrupt the dimerization of ERN1/IRE1, thereby inactivating ERN1/IRE1. Also binds and inactivates EIF2AK3/PERK in unstressed cells. Accumulation of misfolded protein in the endoplasmic reticulum causes release of HSPA5/BiP from ERN1/IRE1 and EIF2AK3/PERK, allowing their homodimerization and subsequent activation. Plays an auxiliary role in post-translational transport of small presecretory proteins across endoplasmic reticulum (ER). May function as an allosteric modulator for SEC61 channel-forming translocon complex, likely cooperating with SEC62 to enable the productive insertion of these precursors into SEC61 channel. Appears to specifically regulate translocation of precursors having inhibitory residues in their mature region that weaken channel gating. May also play a role in apoptosis and cell proliferation. The protein is Endoplasmic reticulum chaperone BiP of Pongo abelii (Sumatran orangutan).